An 865-amino-acid polypeptide reads, in one-letter code: MPGLALLGLTALLGLTALLDHGEGATSCLSQQLRMQGDYVLGGLFPLGSAEGTGLGDGLQPNATVCTRFSSLGLLWALAVKMAVEEINNGSALLPGLHLGYDLFDTCSEPMVAMKPSLVFMAKAGSCSIAAYCNYTQYQPRVLAVIGPHSSELALVTGKFFSFFLVPQVSYGASTDRLSNREIFPSFFRTVPSDQVQVAAMVELLEELGWNWVAAVGSDDEYGRQGLSLFSGLASARGICIAHEGLVPLPPGSLRLGALQGLLRQVNQSSVQVVVLFSSAHAARTLFSYSIRCKLSPKVWVASEAWLTSDLVMTLPGMPGVGTVLGFLQQGAPMPEFPSYVRTRLALAADPAFCASLDAEQPGLEEHVVGPRCPQCDHVTLENLSAGLLHHQTFAAYAAVYGVAQALHNTLRCNASGCPRREPVRPWQLLENMYNVSFRARGLALQFDASGNVNVDYDLKLWVWQDPTPELRTVGTFKGRLELWRSQMCWHTPGKQQPVSQCSRQCKEGQVRRVKGFHSCCYNCVDCKAGSYQRNPDDLLCTQCDQDQWSPDRSTRCFARKPMFLAWGEPAVLLLLALLALALGLALAALGLFLWHSDSPLVQASGGPRACFGLACLGLVCLSVLLFPGQPGPASCLAQQPLFHLPLTGCLSTFFLQAAEIFVGSELPPSWAEKMRGRLRGPWAWLVVLLAMLAEAALCAWYLVAFPPEVVTDWRVLPTEALVHCHVHSWISFGLVHATNAMLAFLCFLGTFLVQSRPGRYNGARGLTFAMLAYFITWISFVPLFANVHVAYQPAVQMGTILLCALGILATFHLPKCYLLLQRPELNTPEFFLEDNARAQGSSWGQGRGESGQKQVTPDPVTSPQ.

The signal sequence occupies residues 1-24; that stretch reads MPGLALLGLTALLGLTALLDHGEG. Over 25-573 the chain is Extracellular; that stretch reads ATSCLSQQLR…FLAWGEPAVL (549 aa). Asparagine 134 and asparagine 267 each carry an N-linked (GlcNAc...) asparagine glycan. A helical transmembrane segment spans residues 574–594; sequence LLLALLALALGLALAALGLFL. The Cytoplasmic segment spans residues 595 to 606; the sequence is WHSDSPLVQASG. The chain crosses the membrane as a helical span at residues 607–627; it reads GPRACFGLACLGLVCLSVLLF. Residues 628-642 are Extracellular-facing; it reads PGQPGPASCLAQQPL. Residues 643 to 663 traverse the membrane as a helical segment; it reads FHLPLTGCLSTFFLQAAEIFV. Residues 664–685 lie on the Cytoplasmic side of the membrane; sequence GSELPPSWAEKMRGRLRGPWAW. A helical membrane pass occupies residues 686 to 706; the sequence is LVVLLAMLAEAALCAWYLVAF. Residues 707-732 lie on the Extracellular side of the membrane; it reads PPEVVTDWRVLPTEALVHCHVHSWIS. A helical transmembrane segment spans residues 733–753; it reads FGLVHATNAMLAFLCFLGTFL. The Cytoplasmic portion of the chain corresponds to 754–765; sequence VQSRPGRYNGAR. A helical transmembrane segment spans residues 766–786; the sequence is GLTFAMLAYFITWISFVPLFA. The Extracellular segment spans residues 787-794; it reads NVHVAYQP. The helical transmembrane segment at 795-815 threads the bilayer; that stretch reads AVQMGTILLCALGILATFHLP. Residues 816-865 lie on the Cytoplasmic side of the membrane; sequence KCYLLLQRPELNTPEFFLEDNARAQGSSWGQGRGESGQKQVTPDPVTSPQ. The tract at residues 840–865 is disordered; that stretch reads QGSSWGQGRGESGQKQVTPDPVTSPQ. Positions 852–865 are enriched in polar residues; it reads GQKQVTPDPVTSPQ.

It belongs to the G-protein coupled receptor 3 family. TAS1R subfamily. In terms of assembly, forms homodimers or a heterodimer with TAS1R1. Expressed in taste buds.

Its subcellular location is the cell membrane. Functionally, putative taste receptor. TAS1R1/TAS1R3 responds to the umami taste stimulus (the taste of monosodium glutamate). This is Taste receptor type 1 member 3 (TAS1R3) from Felis catus (Cat).